The chain runs to 559 residues: Oxygen-dependent choline dehydrogenase (559 aa).

4 to 33 serves as a coordination point for FAD; that stretch reads DYIIIGAGSAGNVLAARLTEESDVSVLLLE. Positions 182-202 are disordered; that stretch reads EGFGPMDRTVTPKGRRASTAR. Residue His471 is the Proton acceptor of the active site.

It belongs to the GMC oxidoreductase family. Requires FAD as cofactor.

It catalyses the reaction choline + A = betaine aldehyde + AH2. The catalysed reaction is betaine aldehyde + NAD(+) + H2O = glycine betaine + NADH + 2 H(+). It participates in amine and polyamine biosynthesis; betaine biosynthesis via choline pathway; betaine aldehyde from choline (cytochrome c reductase route): step 1/1. Involved in the biosynthesis of the osmoprotectant glycine betaine. Catalyzes the oxidation of choline to betaine aldehyde and betaine aldehyde to glycine betaine at the same rate. The polypeptide is Oxygen-dependent choline dehydrogenase (Pectobacterium atrosepticum (strain SCRI 1043 / ATCC BAA-672) (Erwinia carotovora subsp. atroseptica)).